A 1010-amino-acid polypeptide reads, in one-letter code: Polyhomeotic-like protein 1 (1010 aa).

The segment covering 1–22 (METESEQNSSSTNGSSSSGASS) has biased composition (low complexity). Disordered stretches follow at residues 1-25 (METE…SRPQ), 212-243 (NQQA…LSQT), 259-312 (GQSL…TGVV), 444-506 (QQQG…SKPP), 565-588 (GAVQ…PGAL), and 646-678 (KRKA…SPKV). Over residues 212-228 (NQQASAQGPQMPGSTQK) the composition is skewed to polar residues. The segment covering 279–292 (MGPGGGGQAPGGLG) has biased composition (gly residues). Over residues 453–463 (PQPPQVPPTQQ) the composition is skewed to pro residues. The segment covering 464 to 480 (VPPSQSQQQAQTLVVQP) has biased composition (low complexity). Positions 488–500 (TLPPEPTSKPPIP) are enriched in pro residues. Residues 575 to 587 (ASSPPSSQAAPGA) are compositionally biased toward low complexity. At Ser651 the chain carries Phosphoserine. Lys769 participates in a covalent cross-link: Glycyl lysine isopeptide (Lys-Gly) (interchain with G-Cter in SUMO2). Positions 772–794 (QAGLPTGLNESQPSGPLGGDSPS) are disordered. The segment at 797 to 831 (LEKKANLLKCEYCGKYAPAEQFRGSKRFCSMTCAK) adopts an FCS-type zinc-finger fold. 4 residues coordinate Zn(2+): Cys806, Cys809, Cys825, and Cys829. The disordered stretch occupies residues 854 to 928 (ASYARVRRRG…LGNTITTPST (75 aa)). A Phosphoserine modification is found at Ser904. Thr928 bears the Phosphothreonine mark. An SAM domain is found at 946–1010 (WSVEEVYEFI…CAKINVLKET (65 aa)).

Homodimer. Component of a PRC1-like complex. Interacts with the SAM domain of SCMH1 via its SAM domain in vitro. Interacts with RNF2 and CBX7. Interacts with PHC2. Interacts with BMI1. In terms of tissue distribution, highly expressed in testis with lower levels in most other tissues. Expressed in embryonic stem cells.

The protein resides in the nucleus. In terms of biological role, component of a Polycomb group (PcG) multiprotein PRC1-like complex, a complex class required to maintain the transcriptionally repressive state of many genes, including Hox genes, throughout development. PcG PRC1 complex acts via chromatin remodeling and modification of histones; it mediates monoubiquitination of histone H2A 'Lys-119', rendering chromatin heritably changed in its expressibility. Required for proper control of cellular levels of GMNN expression. The chain is Polyhomeotic-like protein 1 from Mus musculus (Mouse).